The sequence spans 199 residues: Sulfocyanin (199 aa).

A helical; Signal-anchor for type II membrane protein transmembrane segment spans residues 7–27 (VLPVVVGILVVIIAVAVGVYV). The Plastocyanin-like domain occupies 79 to 188 (NFNGTSSGSL…SGMWAVLVAS (110 aa)). The Cu cation site is built by His-110, Cys-171, His-176, and Met-181.

The protein belongs to the multicopper oxidase family.

Its subcellular location is the cell membrane. Functionally, the 4 redox proteins SoxE, SoxF, SoxG and SoxH probably form part of a membrane respiratory complex together with SoxM, a catalytic subunit of cytochrome oxidase. This is Sulfocyanin (soxE) from Sulfolobus acidocaldarius (strain ATCC 33909 / DSM 639 / JCM 8929 / NBRC 15157 / NCIMB 11770).